The following is a 72-amino-acid chain: V-type proton ATPase subunit e (72 aa).

At Met-1–Ser-2 the chain is on the lumenal side. Residues Phe-3 to Leu-23 traverse the membrane as a helical segment. Residues Ala-24–Ser-34 lie on the Cytoplasmic side of the membrane. A helical membrane pass occupies residues Thr-35 to Leu-55. Topologically, residues His-56–Glu-72 are lumenal.

Belongs to the V-ATPase e1/e2 subunit family. In terms of assembly, V-ATPase is a heteromultimeric enzyme composed of a peripheral catalytic V1 complex (components A to H) attached to an integral membrane V0 proton pore complex (components: a, c, c', c'', d, e, f and VOA1).

Its subcellular location is the vacuole membrane. Subunit of the V0 complex of vacuolar(H+)-ATPase (V-ATPase), a multisubunit enzyme composed of a peripheral complex (V1) that hydrolyzes ATP and a membrane integral complex (V0) that translocates protons. V-ATPase is responsible for acidifying and maintaining the pH of intracellular compartments. The polypeptide is V-type proton ATPase subunit e (VMA9) (Eremothecium gossypii (strain ATCC 10895 / CBS 109.51 / FGSC 9923 / NRRL Y-1056) (Yeast)).